Consider the following 303-residue polypeptide: Uricase (303 aa).

Catalysis depends on charge relay system residues lysine 12 and threonine 60. Residues threonine 60, aspartate 61, phenylalanine 162, arginine 179, valine 234, glutamine 235, and asparagine 261 each contribute to the urate site. The active-site Charge relay system is the histidine 263. A Microbody targeting signal motif is present at residues 301 to 303 (TKL).

This sequence belongs to the uricase family.

The protein resides in the peroxisome. The enzyme catalyses urate + O2 + H2O = 5-hydroxyisourate + H2O2. The protein operates within purine metabolism; urate degradation; (S)-allantoin from urate: step 1/3. Its function is as follows. Catalyzes the oxidation of uric acid to 5-hydroxyisourate, which is further processed to form (S)-allantoin. In Cyberlindnera jadinii (Torula yeast), this protein is Uricase.